Consider the following 120-residue polypeptide: Natriuretic peptide (120 aa).

The N-terminal stretch at 1–25 is a signal peptide; that stretch reads MVGLSRLADGGLLLVLALLPLALDG. Positions 26–70 are excised as a propeptide; sequence KPAPLEKAPMAPARIIPYLRPVGKESRAALDRMVPPEDGDSRRLE. Cysteine 81 and cysteine 97 are disulfide-bonded. A propeptide spanning residues 110-120 is cleaved from the precursor; it reads ILPYLRPIRKE.

This sequence belongs to the natriuretic peptide family. In terms of tissue distribution, expressed by the venom gland.

The protein localises to the secreted. Its function is as follows. Natriuretic peptide that dose-dependently induces the rapid relaxation of rat aortic strips phenylephrine-precontracted. Acts by stimulating cGMP production in a dose-dependent manner (by probably activating NPR1 and/or NPR2). May also show potent hypotensive effects. This Micrurus altirostris (Uruguayan coral snake) protein is Natriuretic peptide.